The sequence spans 363 residues: mRNA decay activator protein ZFP36L2-A (363 aa).

An RNA-binding motif is present at residues R131 to L136. 2 C3H1-type zinc fingers span residues R131–H159 and K169–E197. Residues Y148–R189 form an RNA-binding region. The interval E308–N349 is disordered. Low complexity predominate over residues Y328–D347.

In terms of processing, phosphorylated. Widely expressed in adults.

It is found in the nucleus. The protein localises to the cytoplasm. Its function is as follows. Zinc-finger RNA-binding protein that destabilizes several cytoplasmic AU-rich element (ARE)-containing mRNA transcripts by promoting their poly(A) tail removal or deadenylation, and hence provide a mechanism for attenuating protein synthesis. Acts as a 3'-untranslated region (UTR) ARE mRNA-binding adapter protein to communicate signaling events to the mRNA decay machinery. Functions by recruiting the CCR4-NOT deadenylase complex and probably other components of the cytoplasmic RNA decay machinery to the bound ARE-containing mRNAs, and hence promotes ARE-mediated mRNA deadenylation and decay processes. Binds to 3'-UTR ARE of numerous mRNAs. Also induces the degradation of ARE-containing mRNAs even in absence of poly(A) tail. Required for tubulogenesis during pronephros development. This is mRNA decay activator protein ZFP36L2-A (zfp36l2-A) from Xenopus laevis (African clawed frog).